A 500-amino-acid chain; its full sequence is Maturase K (500 aa).

The protein belongs to the intron maturase 2 family. MatK subfamily.

The protein resides in the plastid. Its subcellular location is the chloroplast. Its function is as follows. Usually encoded in the trnK tRNA gene intron. Probably assists in splicing its own and other chloroplast group II introns. This is Maturase K from Proboscidea louisianica (Louisiana Devil's-claw).